The sequence spans 195 residues: dITP/XTP pyrophosphatase (195 aa).

8–13 (SNNQGK) is a binding site for substrate. Residues Glu39 and Asp68 each contribute to the Mg(2+) site. Asp68 functions as the Proton acceptor in the catalytic mechanism. Substrate is bound by residues Ser69, 149-152 (FGYD), Lys172, and 177-178 (HR).

This sequence belongs to the HAM1 NTPase family. Homodimer. Mg(2+) is required as a cofactor.

It carries out the reaction XTP + H2O = XMP + diphosphate + H(+). The catalysed reaction is dITP + H2O = dIMP + diphosphate + H(+). The enzyme catalyses ITP + H2O = IMP + diphosphate + H(+). Functionally, pyrophosphatase that catalyzes the hydrolysis of nucleoside triphosphates to their monophosphate derivatives, with a high preference for the non-canonical purine nucleotides XTP (xanthosine triphosphate), dITP (deoxyinosine triphosphate) and ITP. Seems to function as a house-cleaning enzyme that removes non-canonical purine nucleotides from the nucleotide pool, thus preventing their incorporation into DNA/RNA and avoiding chromosomal lesions. The chain is dITP/XTP pyrophosphatase from Staphylococcus aureus (strain MRSA252).